We begin with the raw amino-acid sequence, 248 residues long: Pyridoxine 5'-phosphate synthase (248 aa).

Asn-12 is a 3-amino-2-oxopropyl phosphate binding site. Residue 14–15 (DH) participates in 1-deoxy-D-xylulose 5-phosphate binding. Arg-23 contacts 3-amino-2-oxopropyl phosphate. His-48 (proton acceptor) is an active-site residue. Residues Arg-50 and His-55 each coordinate 1-deoxy-D-xylulose 5-phosphate. Glu-75 serves as the catalytic Proton acceptor. Thr-105 is a 1-deoxy-D-xylulose 5-phosphate binding site. His-196 functions as the Proton donor in the catalytic mechanism. Residues Gly-197 and 218–219 (GH) contribute to the 3-amino-2-oxopropyl phosphate site.

The protein belongs to the PNP synthase family. In terms of assembly, homooctamer; tetramer of dimers.

It localises to the cytoplasm. The catalysed reaction is 3-amino-2-oxopropyl phosphate + 1-deoxy-D-xylulose 5-phosphate = pyridoxine 5'-phosphate + phosphate + 2 H2O + H(+). The protein operates within cofactor biosynthesis; pyridoxine 5'-phosphate biosynthesis; pyridoxine 5'-phosphate from D-erythrose 4-phosphate: step 5/5. Catalyzes the complicated ring closure reaction between the two acyclic compounds 1-deoxy-D-xylulose-5-phosphate (DXP) and 3-amino-2-oxopropyl phosphate (1-amino-acetone-3-phosphate or AAP) to form pyridoxine 5'-phosphate (PNP) and inorganic phosphate. In Pseudomonas fluorescens (strain ATCC BAA-477 / NRRL B-23932 / Pf-5), this protein is Pyridoxine 5'-phosphate synthase.